Reading from the N-terminus, the 476-residue chain is Proline--tRNA ligase 2 (476 aa).

The protein belongs to the class-II aminoacyl-tRNA synthetase family. ProS type 3 subfamily. Homodimer.

The protein resides in the cytoplasm. It carries out the reaction tRNA(Pro) + L-proline + ATP = L-prolyl-tRNA(Pro) + AMP + diphosphate. In terms of biological role, catalyzes the attachment of proline to tRNA(Pro) in a two-step reaction: proline is first activated by ATP to form Pro-AMP and then transferred to the acceptor end of tRNA(Pro). In Bacillus thuringiensis (strain Al Hakam), this protein is Proline--tRNA ligase 2.